The chain runs to 882 residues: DNA mismatch repair protein MutS (882 aa).

Residue 627 to 634 coordinates ATP; the sequence is GPNMAGKS.

It belongs to the DNA mismatch repair MutS family.

Functionally, this protein is involved in the repair of mismatches in DNA. It is possible that it carries out the mismatch recognition step. This protein has a weak ATPase activity. The protein is DNA mismatch repair protein MutS of Anaeromyxobacter sp. (strain K).